Reading from the N-terminus, the 156-residue chain is Protein Smg homolog (156 aa).

It belongs to the Smg family.

The sequence is that of Protein Smg homolog from Halorhodospira halophila (strain DSM 244 / SL1) (Ectothiorhodospira halophila (strain DSM 244 / SL1)).